The chain runs to 714 residues: Polyribonucleotide nucleotidyltransferase (714 aa).

The Mg(2+) site is built by D488 and D494. The KH domain maps to 555-614 (PRIEVMNIPVDKIREVIGSGGKVIREIVEKTGAKINIDDDGTVKIASASGKEIEAARKWI). The S1 motif domain occupies 624–692 (GQVYEGTVVK…ERGKVRLSMK (69 aa)).

This sequence belongs to the polyribonucleotide nucleotidyltransferase family. Mg(2+) is required as a cofactor.

Its subcellular location is the cytoplasm. The catalysed reaction is RNA(n+1) + phosphate = RNA(n) + a ribonucleoside 5'-diphosphate. In terms of biological role, involved in mRNA degradation. Catalyzes the phosphorolysis of single-stranded polyribonucleotides processively in the 3'- to 5'-direction. In Sinorhizobium medicae (strain WSM419) (Ensifer medicae), this protein is Polyribonucleotide nucleotidyltransferase.